Reading from the N-terminus, the 217-residue chain is Homeobox protein Hox-B7 (217 aa).

Positions 126–131 (IYPWMR) match the Antp-type hexapeptide motif. A DNA-binding region (homeobox) is located at residues 137-196 (RKRGRQTYTRYQTLELEKEFHYNRYLTRRRRIEIAHTLCLTERQIKIWFQNRRMKWKKEN). A disordered region spans residues 192–217 (WKKENKTSGPGTTGQDKAEAEEEEEE).

It belongs to the Antp homeobox family. Forms a DNA-binding heterodimer with transcription factor PBX1.

It localises to the nucleus. In terms of biological role, sequence-specific transcription factor which is part of a developmental regulatory system that provides cells with specific positional identities on the anterior-posterior axis. In Mus musculus (Mouse), this protein is Homeobox protein Hox-B7 (Hoxb7).